The primary structure comprises 492 residues: ATP synthase subunit beta, chloroplastic (492 aa).

Residue 170-177 (GGAGVGKT) coordinates ATP.

Belongs to the ATPase alpha/beta chains family. F-type ATPases have 2 components, CF(1) - the catalytic core - and CF(0) - the membrane proton channel. CF(1) has five subunits: alpha(3), beta(3), gamma(1), delta(1), epsilon(1). CF(0) has four main subunits: a(1), b(1), b'(1) and c(9-12).

Its subcellular location is the plastid. It localises to the chloroplast thylakoid membrane. It catalyses the reaction ATP + H2O + 4 H(+)(in) = ADP + phosphate + 5 H(+)(out). Produces ATP from ADP in the presence of a proton gradient across the membrane. The catalytic sites are hosted primarily by the beta subunits. In Psilotum nudum (Whisk fern), this protein is ATP synthase subunit beta, chloroplastic.